The sequence spans 140 residues: Large ribosomal subunit protein uL11 (140 aa).

This sequence belongs to the universal ribosomal protein uL11 family. As to quaternary structure, part of the ribosomal stalk of the 50S ribosomal subunit. Interacts with L10 and the large rRNA to form the base of the stalk. L10 forms an elongated spine to which L12 dimers bind in a sequential fashion forming a multimeric L10(L12)X complex. One or more lysine residues are methylated.

Its function is as follows. Forms part of the ribosomal stalk which helps the ribosome interact with GTP-bound translation factors. The sequence is that of Large ribosomal subunit protein uL11 from Staphylococcus epidermidis (strain ATCC 35984 / DSM 28319 / BCRC 17069 / CCUG 31568 / BM 3577 / RP62A).